A 397-amino-acid chain; its full sequence is Serpin B10 (397 aa).

The Nuclear localization signal motif lies at 74–77 (KKRK).

Belongs to the serpin family. Ov-serpin subfamily. In terms of tissue distribution, expressed in many tissues, including brain, heart, kidney, liver, lung, prostate, skin, spleen and stomach.

The protein resides in the nucleus. It is found in the cytoplasm. Protease inhibitor that may play a role in the regulation of protease activities during hematopoiesis and apoptosis induced by TNF. May regulate protease activities in the cytoplasm and in the nucleus. Inhibits plasmin. In Rattus norvegicus (Rat), this protein is Serpin B10 (Serpinb10).